The chain runs to 167 residues: Leptin (167 aa).

An N-terminal signal peptide occupies residues 1-21 (MRCGSLCRFLWLWSCLPYIEA). A disulfide bond links C117 and C167.

The protein belongs to the leptin family.

The protein localises to the secreted. Key player in the regulation of energy balance and body weight control. Once released into the circulation, has central and peripheral effects by binding LEPR, found in many tissues, which results in the activation of several major signaling pathways. In the hypothalamus, acts as an appetite-regulating factor that induces a decrease in food intake and an increase in energy consumption by inducing anorexinogenic factors and suppressing orexigenic neuropeptides, also regulates bone mass and secretion of hypothalamo-pituitary-adrenal hormones. In the periphery, increases basal metabolism, influences reproductive function, regulates pancreatic beta-cell function and insulin secretion, is pro-angiogenic for endothelial cell and affects innate and adaptive immunity. In the arcuate nucleus of the hypothalamus, activates by depolarization POMC neurons inducing FOS and SOCS3 expression to release anorexigenic peptides and inhibits by hyperpolarization NPY neurons inducing SOCS3 with a consequent reduction on release of orexigenic peptides. In addition to its known satiety inducing effect, has a modulatory role in nutrient absorption. In the intestine, reduces glucose absorption by enterocytes by activating PKC and leading to a sequential activation of p38, PI3K and ERK signaling pathways which exerts an inhibitory effect on glucose absorption. Acts as a growth factor on certain tissues, through the activation of different signaling pathways increases expression of genes involved in cell cycle regulation such as CCND1, via JAK2-STAT3 pathway, or VEGFA, via MAPK1/3 and PI3K-AKT1 pathways. May also play an apoptotic role via JAK2-STAT3 pathway and up-regulation of BIRC5 expression. Pro-angiogenic, has mitogenic activity on vascular endothelial cells and plays a role in matrix remodeling by regulating the expression of matrix metalloproteinases (MMPs) and tissue inhibitors of metalloproteinases (TIMPs). In innate immunity, modulates the activity and function of neutrophils by increasing chemotaxis and the secretion of oxygen radicals. Increases phagocytosis by macrophages and enhances secretion of pro-inflammatory mediators. Increases cytotoxic ability of NK cells. Plays a pro-inflammatory role, in synergy with IL1B, by inducing NOS2 which promotes the production of IL6, IL8 and Prostaglandin E2, through a signaling pathway that involves JAK2, PI3K, MAP2K1/MEK1 and MAPK14/p38. In adaptive immunity, promotes the switch of memory T-cells towards T helper-1 cell immune responses. Increases CD4(+)CD25(-) T-cell proliferation and reduces autophagy during TCR (T-cell receptor) stimulation, through MTOR signaling pathway activation and BCL2 up-regulation. This chain is Leptin (LEP), found in Halichoerus grypus (Gray seal).